A 435-amino-acid chain; its full sequence is NADH-quinone oxidoreductase subunit D (435 aa).

The protein belongs to the complex I 49 kDa subunit family. In terms of assembly, NDH-1 is composed of 14 different subunits. Subunits NuoB, C, D, E, F, and G constitute the peripheral sector of the complex.

It is found in the cell inner membrane. It carries out the reaction a quinone + NADH + 5 H(+)(in) = a quinol + NAD(+) + 4 H(+)(out). In terms of biological role, NDH-1 shuttles electrons from NADH, via FMN and iron-sulfur (Fe-S) centers, to quinones in the respiratory chain. The immediate electron acceptor for the enzyme in this species is believed to be ubiquinone. Couples the redox reaction to proton translocation (for every two electrons transferred, four hydrogen ions are translocated across the cytoplasmic membrane), and thus conserves the redox energy in a proton gradient. This is NADH-quinone oxidoreductase subunit D from Xylella fastidiosa (strain M12).